Here is a 205-residue protein sequence, read N- to C-terminus: Imidazole glycerol phosphate synthase subunit HisH (205 aa).

The 203-residue stretch at 3–205 (RIALLDYGMG…LLKNFVEWNI (203 aa)) folds into the Glutamine amidotransferase type-1 domain. C80 (nucleophile) is an active-site residue. Residues H185 and E187 contribute to the active site.

Heterodimer of HisH and HisF.

The protein resides in the cytoplasm. The catalysed reaction is 5-[(5-phospho-1-deoxy-D-ribulos-1-ylimino)methylamino]-1-(5-phospho-beta-D-ribosyl)imidazole-4-carboxamide + L-glutamine = D-erythro-1-(imidazol-4-yl)glycerol 3-phosphate + 5-amino-1-(5-phospho-beta-D-ribosyl)imidazole-4-carboxamide + L-glutamate + H(+). The enzyme catalyses L-glutamine + H2O = L-glutamate + NH4(+). Its pathway is amino-acid biosynthesis; L-histidine biosynthesis; L-histidine from 5-phospho-alpha-D-ribose 1-diphosphate: step 5/9. In terms of biological role, IGPS catalyzes the conversion of PRFAR and glutamine to IGP, AICAR and glutamate. The HisH subunit catalyzes the hydrolysis of glutamine to glutamate and ammonia as part of the synthesis of IGP and AICAR. The resulting ammonia molecule is channeled to the active site of HisF. The protein is Imidazole glycerol phosphate synthase subunit HisH of Acinetobacter baylyi (strain ATCC 33305 / BD413 / ADP1).